A 585-amino-acid chain; its full sequence is Glutamate decarboxylase 2 (585 aa).

Residues 1–24 (MASPGSGFWSFGSEDGSGDPENSG) form a disordered region. Residues Ser-3, Ser-6, Ser-10, and Ser-13 each carry the phosphoserine modification. Residues Cys-30 and Cys-45 are each lipidated (S-palmitoyl cysteine). Residue 181-183 (QLS) participates in substrate binding. Lys-396 is subject to N6-(pyridoxal phosphate)lysine. Position 558 (Arg-558) interacts with substrate.

Belongs to the group II decarboxylase family. As to quaternary structure, homodimer. The cofactor is pyridoxal 5'-phosphate. Phosphorylated; which does not affect kinetic parameters or subcellular location. Post-translationally, palmitoylated; which is required for presynaptic clustering.

It is found in the cytoplasm. Its subcellular location is the cytosol. It localises to the cytoplasmic vesicle. The protein localises to the presynaptic cell membrane. The protein resides in the golgi apparatus membrane. It carries out the reaction L-glutamate + H(+) = 4-aminobutanoate + CO2. Its function is as follows. Catalyzes the production of GABA. The sequence is that of Glutamate decarboxylase 2 (GAD2) from Sus scrofa (Pig).